Here is a 347-residue protein sequence, read N- to C-terminus: UDP-N-acetylenolpyruvoylglucosamine reductase (347 aa).

The FAD-binding PCMH-type domain occupies 15-187 (FGIEQTCSYL…TAIGLKLPKR (173 aa)). Residue arginine 163 is part of the active site. Serine 233 serves as the catalytic Proton donor. Glutamate 328 is a catalytic residue.

It belongs to the MurB family. FAD serves as cofactor.

It is found in the cytoplasm. The catalysed reaction is UDP-N-acetyl-alpha-D-muramate + NADP(+) = UDP-N-acetyl-3-O-(1-carboxyvinyl)-alpha-D-glucosamine + NADPH + H(+). Its pathway is cell wall biogenesis; peptidoglycan biosynthesis. Its function is as follows. Cell wall formation. The sequence is that of UDP-N-acetylenolpyruvoylglucosamine reductase from Vibrio parahaemolyticus serotype O3:K6 (strain RIMD 2210633).